Here is a 114-residue protein sequence, read N- to C-terminus: Ig heavy chain V region (114 aa).

The 106-residue stretch at 1–106 folds into the Ig-like domain; the sequence is EVQLQQSGAE…AVRVISRYFD (106 aa).

The polypeptide is Ig heavy chain V region (Mus musculus (Mouse)).